The following is a 166-amino-acid chain: Transcriptional repressor NrdR (166 aa).

Residues 3–34 fold into a zinc finger; that stretch reads CPFCGHDDTQVKDSRSTEDGVAIRRRRVCSAC. Positions 49 to 139 constitute an ATP-cone domain; the sequence is LSVTKADGRR…VYRDFREVEA (91 aa). Residues 146 to 166 form a disordered region; that stretch reads DMKPIPGETDTPSPDDSQETP.

Belongs to the NrdR family. Requires Zn(2+) as cofactor.

Functionally, negatively regulates transcription of bacterial ribonucleotide reductase nrd genes and operons by binding to NrdR-boxes. The sequence is that of Transcriptional repressor NrdR from Gluconobacter oxydans (strain 621H) (Gluconobacter suboxydans).